Reading from the N-terminus, the 176-residue chain is NAD(P)H-quinone oxidoreductase subunit 6, chloroplastic (176 aa).

The next 5 membrane-spanning stretches (helical) occupy residues 10–30 (FLLVFLGSGLLVGGLGVVLLP), 32–52 (PIFSAFSLGFVLVCISLLYIL), 61–81 (AQLLIYVGAINVLIIFAVMFM), 92–112 (LWTVGDGITSLVCTTILFSLI), and 152–172 (FFLPFELISIILLVALVGAIS).

Belongs to the complex I subunit 6 family. As to quaternary structure, NDH is composed of at least 16 different subunits, 5 of which are encoded in the nucleus.

The protein localises to the plastid. Its subcellular location is the chloroplast thylakoid membrane. The catalysed reaction is a plastoquinone + NADH + (n+1) H(+)(in) = a plastoquinol + NAD(+) + n H(+)(out). It carries out the reaction a plastoquinone + NADPH + (n+1) H(+)(in) = a plastoquinol + NADP(+) + n H(+)(out). Functionally, NDH shuttles electrons from NAD(P)H:plastoquinone, via FMN and iron-sulfur (Fe-S) centers, to quinones in the photosynthetic chain and possibly in a chloroplast respiratory chain. The immediate electron acceptor for the enzyme in this species is believed to be plastoquinone. Couples the redox reaction to proton translocation, and thus conserves the redox energy in a proton gradient. This is NAD(P)H-quinone oxidoreductase subunit 6, chloroplastic (ndhG) from Lobularia maritima (Sweet alyssum).